Consider the following 139-residue polypeptide: D-ribose pyranase (139 aa).

The active-site Proton donor is the H20. Substrate-binding positions include D28, H106, and 128-130 (YAN).

Belongs to the RbsD / FucU family. RbsD subfamily. Homodecamer.

Its subcellular location is the cytoplasm. The catalysed reaction is beta-D-ribopyranose = beta-D-ribofuranose. The protein operates within carbohydrate metabolism; D-ribose degradation; D-ribose 5-phosphate from beta-D-ribopyranose: step 1/2. Catalyzes the interconversion of beta-pyran and beta-furan forms of D-ribose. This Escherichia coli O81 (strain ED1a) protein is D-ribose pyranase.